Consider the following 460-residue polypeptide: Argininosuccinate lyase (460 aa).

The protein belongs to the lyase 1 family. Argininosuccinate lyase subfamily.

The protein resides in the cytoplasm. It catalyses the reaction 2-(N(omega)-L-arginino)succinate = fumarate + L-arginine. The protein operates within amino-acid biosynthesis; L-arginine biosynthesis; L-arginine from L-ornithine and carbamoyl phosphate: step 3/3. The protein is Argininosuccinate lyase of Buchnera aphidicola subsp. Cinara cedri (strain Cc).